The sequence spans 450 residues: Sorting nexin-4 (450 aa).

M1 carries the post-translational modification N-acetylmethionine. A disordered region spans residues 1–46 (MEQAPPDPERQLQPAPLEPLGSPDAVLGAAVGKETEGAGEESSGVD). A Phosphoserine modification is found at S22. The PX domain maps to 61-187 (SVSEAEKRTG…YLFLTQEGNW (127 aa)). A 1,2-diacyl-sn-glycero-3-phospho-(1D-myo-inositol-3-phosphate)-binding residues include R106, S108, K132, and R154.

It belongs to the sorting nexin family. As to quaternary structure, heterodimer; heterodimerizes with SNX7 or SNX30. Interacts with WWC1/KIBRA. Identified in a complex with WWC1/KIBRA and dynein components DYNLL1 and DYNC1I2. Interacts with BIN1.

Its subcellular location is the early endosome. The protein resides in the early endosome membrane. In terms of biological role, involved in the regulation of endocytosis and in several stages of intracellular trafficking. Plays a role in recycling endocytosed transferrin receptor and prevent its degradation. Involved in autophagosome assembly by regulating trafficking and recycling of phospholipid scramblase ATG9A. This is Sorting nexin-4 from Pongo abelii (Sumatran orangutan).